The sequence spans 313 residues: Formimidoylglutamase (313 aa).

Mn(2+) contacts are provided by histidine 130, aspartate 155, histidine 157, aspartate 159, aspartate 241, and aspartate 243.

It belongs to the arginase family. The cofactor is Mn(2+).

The enzyme catalyses N-formimidoyl-L-glutamate + H2O = formamide + L-glutamate. It participates in amino-acid degradation; L-histidine degradation into L-glutamate; L-glutamate from N-formimidoyl-L-glutamate (hydrolase route): step 1/1. Its function is as follows. Catalyzes the conversion of N-formimidoyl-L-glutamate to L-glutamate and formamide. This Salmonella paratyphi A (strain ATCC 9150 / SARB42) protein is Formimidoylglutamase.